Here is a 177-residue protein sequence, read N- to C-terminus: ATP-dependent protease subunit HslV (177 aa).

The active site involves Thr2. Residues Gly158, Cys161, and Thr164 each coordinate Na(+).

The protein belongs to the peptidase T1B family. HslV subfamily. As to quaternary structure, a double ring-shaped homohexamer of HslV is capped on each side by a ring-shaped HslU homohexamer. The assembly of the HslU/HslV complex is dependent on binding of ATP.

Its subcellular location is the cytoplasm. It carries out the reaction ATP-dependent cleavage of peptide bonds with broad specificity.. Its activity is regulated as follows. Allosterically activated by HslU binding. Protease subunit of a proteasome-like degradation complex believed to be a general protein degrading machinery. The sequence is that of ATP-dependent protease subunit HslV from Pseudomonas aeruginosa (strain LESB58).